A 302-amino-acid polypeptide reads, in one-letter code: uncharacterized protein (302 aa).

Positions 1 to 28 are cleaved as a signal peptide; that stretch reads MNKLTAQNLLKKSRFLKYSLLTSISVGA.

This is an uncharacterized protein from Rickettsia prowazekii (strain Madrid E).